Reading from the N-terminus, the 427-residue chain is Gamma-glutamyl phosphate reductase (427 aa).

Belongs to the gamma-glutamyl phosphate reductase family.

The protein resides in the cytoplasm. The catalysed reaction is L-glutamate 5-semialdehyde + phosphate + NADP(+) = L-glutamyl 5-phosphate + NADPH + H(+). It participates in amino-acid biosynthesis; L-proline biosynthesis; L-glutamate 5-semialdehyde from L-glutamate: step 2/2. Its function is as follows. Catalyzes the NADPH-dependent reduction of L-glutamate 5-phosphate into L-glutamate 5-semialdehyde and phosphate. The product spontaneously undergoes cyclization to form 1-pyrroline-5-carboxylate. This chain is Gamma-glutamyl phosphate reductase, found in Rhizobium etli (strain CIAT 652).